Here is a 299-residue protein sequence, read N- to C-terminus: N-acetylaspartate synthetase (299 aa).

Residues 44 to 57 (AAPGPAAAPPPAAG) are compositionally biased toward pro residues. The disordered stretch occupies residues 44–70 (AAPGPAAAPPPAAGPQPHGGTGGAGPP). Gly residues predominate over residues 60–70 (PHGGTGGAGPP). The helical transmembrane segment at 118 to 138 (YALLAALCFAVTRSLLLTCLV) threads the bilayer. Residues 143–280 (LALRYYYSRK…VLPGMTLSLA (138 aa)) form the N-acetyltransferase domain.

The protein belongs to the NAT8 family. Expressed in brain, kidney, liver and spleen. In brain, present in neurons but not in astrocytes (at protein level). Expressed in brain, thymus and spleen.

The protein resides in the cytoplasm. Its subcellular location is the microsome membrane. The protein localises to the mitochondrion membrane. It localises to the endoplasmic reticulum membrane. The enzyme catalyses L-aspartate + acetyl-CoA = N-acetyl-L-aspartate + CoA + H(+). Aminooxyacetic acid (AOAA) blocks its activity in both cytoplasm and mitochondria. Catalyzes the synthesis of N-acetylaspartate acid (NAA) from L-aspartate and acetyl-CoA. Promotes dopamine uptake by regulating TNF-alpha expression. Attenuates methamphetamine-induced inhibition of dopamine uptake. The sequence is that of N-acetylaspartate synthetase (Nat8l) from Mus musculus (Mouse).